Consider the following 107-residue polypeptide: Large ribosomal subunit protein uL24 (107 aa).

Belongs to the universal ribosomal protein uL24 family. Part of the 50S ribosomal subunit.

In terms of biological role, one of two assembly initiator proteins, it binds directly to the 5'-end of the 23S rRNA, where it nucleates assembly of the 50S subunit. Its function is as follows. One of the proteins that surrounds the polypeptide exit tunnel on the outside of the subunit. This is Large ribosomal subunit protein uL24 from Mycobacterium ulcerans (strain Agy99).